We begin with the raw amino-acid sequence, 255 residues long: MGRSPCCEKAHTNRGAWTKEEDERLVAYIRAHGEGCWRSLPKAAGLLRCGKSCRLRWINYLRPDLKRGNFTADEDDLIVKLHSLLGNKWSLIAARLPGRTDNEIKNYWNTHVRRKLLGRGIDPVTHRPIAADAVTVTTVSFQPSPSAAAAAAAEAEATAAKAPRCPDLNLDLCISPPCQQQEEEEVDLKPSAAVVKREVLLGGRGHGHGHGGALCFGCSLGVQKGAPGCSCSSSNGHRCLGLRGGMLDFRGLKMK.

2 consecutive HTH myb-type domains span residues 9–61 and 62–116; these read KAHT…INYL and RPDL…RRKL. DNA-binding regions (H-T-H motif) lie at residues 37–61 and 89–112; these read WRSL…INYL and WSLI…NTHV.

It localises to the nucleus. Transcription factor that negatively regulates genes involved in anthocyanin biosynthesis. In Zea mays (Maize), this protein is Myb-related protein Zm38.